The primary structure comprises 412 residues: Homoserine dehydrogenase (412 aa).

NADP(+)-binding positions include 9–16 (LGIGTVGG) and Lys105. Residue Glu190 participates in substrate binding. The active-site Proton donor is Lys205. Residues 330–407 (YLRLRAVDKP…ISGKVTRLRM (78 aa)) form the ACT domain.

This sequence belongs to the homoserine dehydrogenase family.

The catalysed reaction is L-homoserine + NADP(+) = L-aspartate 4-semialdehyde + NADPH + H(+). The enzyme catalyses L-homoserine + NAD(+) = L-aspartate 4-semialdehyde + NADH + H(+). The protein operates within amino-acid biosynthesis; L-methionine biosynthesis via de novo pathway; L-homoserine from L-aspartate: step 3/3. It participates in amino-acid biosynthesis; L-threonine biosynthesis; L-threonine from L-aspartate: step 3/5. In Methylobacillus glycogenes, this protein is Homoserine dehydrogenase (hom).